A 350-amino-acid chain; its full sequence is (RS)-norcoclaurine 6-O-methyltransferase (350 aa).

M166 is a binding site for S-adenosyl-L-methionine. D169 lines the substrate pocket. S-adenosyl-L-methionine is bound by residues T170, G195, D218, 238 to 239, and K252; that span reads DM. Residues 253 to 257 and D306 contribute to the substrate site; that span reads CILHD. H256 (proton acceptor) is an active-site residue.

The protein belongs to the class I-like SAM-binding methyltransferase superfamily. Cation-independent O-methyltransferase family. COMT subfamily. As to quaternary structure, homodimer. As to expression, expressed in leaf primordia of rhizomes and root endodermis.

It catalyses the reaction (S)-norcoclaurine + S-adenosyl-L-methionine = (S)-coclaurine + S-adenosyl-L-homocysteine + H(+). It carries out the reaction norcoclaurine + S-adenosyl-L-methionine = coclaurine + S-adenosyl-L-homocysteine + H(+). Its activity is regulated as follows. Inhibited by sanguinarine. In terms of biological role, involved in the biosynthesis of coclaurine, a precursor of benzylisoquinoline alkaloids. Catalyzes the transfer of the S-methyl group of S-adenosyl-L-methionine (AdoMet) to the 6-hydroxyl group of norcoclaurine to form coclaurine. This Thalictrum flavum subsp. glaucum (Yellow meadow rue) protein is (RS)-norcoclaurine 6-O-methyltransferase.